A 509-amino-acid chain; its full sequence is tRNA-2-methylthio-N(6)-dimethylallyladenosine synthase (509 aa).

Residues 1–15 (MNEQQRLASQQVNSS) show a composition bias toward polar residues. A disordered region spans residues 1-26 (MNEQQRLASQQVNSSTKKEEKDYSKY). Over residues 16–25 (TKKEEKDYSK) the composition is skewed to basic and acidic residues. One can recognise an MTTase N-terminal domain in the interval 66 to 184 (RKFYIRTYGC…LPYILKDAMF (119 aa)). The [4Fe-4S] cluster site is built by cysteine 75, cysteine 111, cysteine 145, cysteine 221, cysteine 225, and cysteine 228. The 231-residue stretch at 207–437 (RRGDIKAWVN…NALVNKLAIE (231 aa)) folds into the Radical SAM core domain. The TRAM domain maps to 440-503 (NRYKGQIVEV…TWSLNGELVE (64 aa)).

Belongs to the methylthiotransferase family. MiaB subfamily. Monomer. [4Fe-4S] cluster is required as a cofactor.

Its subcellular location is the cytoplasm. It catalyses the reaction N(6)-dimethylallyladenosine(37) in tRNA + (sulfur carrier)-SH + AH2 + 2 S-adenosyl-L-methionine = 2-methylsulfanyl-N(6)-dimethylallyladenosine(37) in tRNA + (sulfur carrier)-H + 5'-deoxyadenosine + L-methionine + A + S-adenosyl-L-homocysteine + 2 H(+). In terms of biological role, catalyzes the methylthiolation of N6-(dimethylallyl)adenosine (i(6)A), leading to the formation of 2-methylthio-N6-(dimethylallyl)adenosine (ms(2)i(6)A) at position 37 in tRNAs that read codons beginning with uridine. In Bacillus cereus (strain AH187), this protein is tRNA-2-methylthio-N(6)-dimethylallyladenosine synthase.